The sequence spans 942 residues: Lambda-carrageenase (942 aa).

A signal peptide spans 1–25 (MKIKILSAMIASSLLIGCVIPTVKA).

Monomer.

Its subcellular location is the secreted. The enzyme catalyses Endohydrolysis of (1-&gt;4)-beta-linkages in the backbone of lambda-carrageenan, resulting in the tetrasaccharide alpha-D-Galp2,6S2-(1-&gt;3)-beta-D-Galp2S-(1-&gt;4)-alpha-D-Galp2,6S2-(1-&gt;3)-D-Galp2S.. In terms of biological role, hydrolyzes lambda-carrageenan with inversion of anomeric configuration. Does not hydrolyze iota- and kappa-carrageenans, agarose or porphyran. The protein is Lambda-carrageenase of Pseudoalteromonas sp.